The primary structure comprises 122 residues: Large ribosomal subunit protein uL14 (122 aa).

It belongs to the universal ribosomal protein uL14 family. In terms of assembly, part of the 50S ribosomal subunit. Forms a cluster with proteins L3 and L19. In the 70S ribosome, L14 and L19 interact and together make contacts with the 16S rRNA in bridges B5 and B8.

In terms of biological role, binds to 23S rRNA. Forms part of two intersubunit bridges in the 70S ribosome. In Paracoccus denitrificans (strain Pd 1222), this protein is Large ribosomal subunit protein uL14.